A 206-amino-acid polypeptide reads, in one-letter code: Small ribosomal subunit protein uS4c (206 aa).

The S4 RNA-binding domain maps to 93-161; that stretch reads MRLDNIVYRL…IEKNIELLDK (69 aa).

It belongs to the universal ribosomal protein uS4 family. As to quaternary structure, part of the 30S ribosomal subunit. Contacts protein S5. The interaction surface between S4 and S5 is involved in control of translational fidelity.

The protein localises to the plastid. One of the primary rRNA binding proteins, it binds directly to 16S rRNA where it nucleates assembly of the body of the 30S subunit. Its function is as follows. With S5 and S12 plays an important role in translational accuracy. The sequence is that of Small ribosomal subunit protein uS4c (rps4) from Euglena longa (Euglenophycean alga).